The following is a 369-amino-acid chain: 3',5'-cyclic-nucleotide phosphodiesterase 1 (369 aa).

This sequence belongs to the cyclic nucleotide phosphodiesterase class-II family.

It carries out the reaction a nucleoside 3',5'-cyclic phosphate + H2O = a nucleoside 5'-phosphate + H(+). Its function is as follows. Controls the level of cAMP in yeast cells, together with the high-affinity cAMP phosphodiesterase (PDE2). The sequence is that of 3',5'-cyclic-nucleotide phosphodiesterase 1 (PDE1) from Saccharomyces cerevisiae (strain ATCC 204508 / S288c) (Baker's yeast).